Consider the following 267-residue polypeptide: Orotidine 5'-phosphate decarboxylase (267 aa).

Residues Asp37, 59–61 (KTH), 91–100 (DRKFADIGNT), Tyr217, and Arg235 each bind substrate. Lys93 (proton donor) is an active-site residue.

It belongs to the OMP decarboxylase family.

It catalyses the reaction orotidine 5'-phosphate + H(+) = UMP + CO2. It participates in pyrimidine metabolism; UMP biosynthesis via de novo pathway; UMP from orotate: step 2/2. The polypeptide is Orotidine 5'-phosphate decarboxylase (URA3) (Kluyveromyces marxianus (Yeast)).